We begin with the raw amino-acid sequence, 433 residues long: Serine--tRNA ligase (433 aa).

L-serine is bound at residue 235–237 (TSE). Position 266–268 (266–268 (RSE)) interacts with ATP. L-serine is bound at residue glutamate 289. 353–356 (EISS) provides a ligand contact to ATP. Serine 388 is a binding site for L-serine.

It belongs to the class-II aminoacyl-tRNA synthetase family. Type-1 seryl-tRNA synthetase subfamily. As to quaternary structure, homodimer. The tRNA molecule binds across the dimer.

It is found in the cytoplasm. It catalyses the reaction tRNA(Ser) + L-serine + ATP = L-seryl-tRNA(Ser) + AMP + diphosphate + H(+). The enzyme catalyses tRNA(Sec) + L-serine + ATP = L-seryl-tRNA(Sec) + AMP + diphosphate + H(+). It functions in the pathway aminoacyl-tRNA biosynthesis; selenocysteinyl-tRNA(Sec) biosynthesis; L-seryl-tRNA(Sec) from L-serine and tRNA(Sec): step 1/1. In terms of biological role, catalyzes the attachment of serine to tRNA(Ser). Is also able to aminoacylate tRNA(Sec) with serine, to form the misacylated tRNA L-seryl-tRNA(Sec), which will be further converted into selenocysteinyl-tRNA(Sec). The chain is Serine--tRNA ligase from Burkholderia cenocepacia (strain HI2424).